The primary structure comprises 216 residues: Corrinoid protein DSY3155 (216 aa).

A B12-binding N-terminal domain is found at 1-90 (MIMSLLDELK…EIAKKGMSEG (90 aa)). Residues 93–216 (KGKIVLGTVE…VELANKILGK (124 aa)) form the B12-binding domain. Position 106 (His106) interacts with methylcob(III)alamin.

It belongs to the methylamine corrinoid protein family.

In terms of biological role, probably harbors a corrinoid prosthetic group and acts as a methyl group carrier between MtgB and MtgA. A methyl group from glycine betaine is likely first transferred to the corrinoid prosthetic group of the enzyme by MtgB, and then transferred to tetrahydrofolate (THF) by MtgA. The methyl group may then be ultimately converted to carbon dioxide, and its oxidation would also provide reducing equivalents for anaerobic respiration. Thus, may function in the pathway that allows anaerobic methylotrophic growth of D.hafniense using glycine betaine. The protein is Corrinoid protein DSY3155 of Desulfitobacterium hafniense (strain Y51).